The primary structure comprises 294 residues: Large ribosomal subunit protein uL4m (294 aa).

Residues 120–139 (VRGGGRKPWQQKGSGRARHG) are disordered. Arg147 carries the omega-N-methylarginine modification.

It belongs to the universal ribosomal protein uL4 family. Component of the mitochondrial ribosome large subunit (39S) which comprises a 16S rRNA and about 50 distinct proteins. Interacts with MIEF1 upstream open reading frame protein.

The protein localises to the mitochondrion. The chain is Large ribosomal subunit protein uL4m (MRPL4) from Bos taurus (Bovine).